The primary structure comprises 529 residues: CTP synthase (529 aa).

An amidoligase domain region spans residues 1 to 267 (MKEAKFIFVT…DTQILEHFHL (267 aa)). Ser15 contributes to the CTP binding site. A UTP-binding site is contributed by Ser15. ATP contacts are provided by residues 16-21 (SLGKGL) and Asp73. Asp73 and Glu141 together coordinate Mg(2+). Residues 148 to 150 (DIE), 188 to 193 (KTKPTQ), and Lys224 each bind CTP. UTP contacts are provided by residues 188–193 (KTKPTQ) and Lys224. Positions 292-529 (TVSIVGKYTE…SFVKAAIDKK (238 aa)) constitute a Glutamine amidotransferase type-1 domain. Gly354 is a binding site for L-glutamine. The Nucleophile; for glutamine hydrolysis role is filled by Cys381. Residues 382–385 (LGMQ), Glu405, and Arg459 contribute to the L-glutamine site. Residues His504 and Glu506 contribute to the active site.

Belongs to the CTP synthase family. As to quaternary structure, homotetramer.

The catalysed reaction is UTP + L-glutamine + ATP + H2O = CTP + L-glutamate + ADP + phosphate + 2 H(+). It catalyses the reaction L-glutamine + H2O = L-glutamate + NH4(+). The enzyme catalyses UTP + NH4(+) + ATP = CTP + ADP + phosphate + 2 H(+). It functions in the pathway pyrimidine metabolism; CTP biosynthesis via de novo pathway; CTP from UDP: step 2/2. With respect to regulation, allosterically activated by GTP, when glutamine is the substrate; GTP has no effect on the reaction when ammonia is the substrate. The allosteric effector GTP functions by stabilizing the protein conformation that binds the tetrahedral intermediate(s) formed during glutamine hydrolysis. Inhibited by the product CTP, via allosteric rather than competitive inhibition. Its function is as follows. Catalyzes the ATP-dependent amination of UTP to CTP with either L-glutamine or ammonia as the source of nitrogen. Regulates intracellular CTP levels through interactions with the four ribonucleotide triphosphates. The sequence is that of CTP synthase from Wolbachia pipientis wMel.